The following is an 88-amino-acid chain: Small ribosomal subunit protein bS18 (88 aa).

The segment at 1 to 22 (MSTKNAKPKKEAQRRPSRKAKV) is disordered.

Belongs to the bacterial ribosomal protein bS18 family. As to quaternary structure, part of the 30S ribosomal subunit. Forms a tight heterodimer with protein bS6.

In terms of biological role, binds as a heterodimer with protein bS6 to the central domain of the 16S rRNA, where it helps stabilize the platform of the 30S subunit. This Thermus thermophilus protein is Small ribosomal subunit protein bS18 (rpsR).